We begin with the raw amino-acid sequence, 225 residues long: Ribonuclease 3 (225 aa).

The region spanning 7–129 is the RNase III domain; it reads IPRLCRTLGY…IIGAIYLDSE (123 aa). Glutamate 42 serves as a coordination point for Mg(2+). The active site involves aspartate 46. Aspartate 115 and glutamate 118 together coordinate Mg(2+). Glutamate 118 is an active-site residue. In terms of domain architecture, DRBM spans 155–225; sequence DPKTLLQEHL…AAQVLELMKK (71 aa).

Belongs to the ribonuclease III family. As to quaternary structure, homodimer. Mg(2+) serves as cofactor.

Its subcellular location is the cytoplasm. It carries out the reaction Endonucleolytic cleavage to 5'-phosphomonoester.. In terms of biological role, digests double-stranded RNA. Involved in the processing of primary rRNA transcript to yield the immediate precursors to the large and small rRNAs (23S and 16S). Processes some mRNAs, and tRNAs when they are encoded in the rRNA operon. Processes pre-crRNA and tracrRNA of type II CRISPR loci if present in the organism. The chain is Ribonuclease 3 from Shewanella halifaxensis (strain HAW-EB4).